Here is a 614-residue protein sequence, read N- to C-terminus: V-type proton ATPase catalytic subunit A (614 aa).

Gly-247–Thr-254 is a binding site for ATP.

It belongs to the ATPase alpha/beta chains family. V-ATPase is a heteromultimeric enzyme made up of two complexes: the ATP-hydrolytic V1 complex and the proton translocation V0 complex. The V1 complex consists of three catalytic AB heterodimers that form a heterohexamer, three peripheral stalks each consisting of EG heterodimers, one central rotor including subunits D and F, and the regulatory subunits C and H. The proton translocation complex V0 consists of the proton transport subunit a, a ring of proteolipid subunits c9c'', rotary subunit d, subunits e and f, and the accessory subunits VhaAC45 and ATP6AP2.

The enzyme catalyses ATP + H2O + 4 H(+)(in) = ADP + phosphate + 5 H(+)(out). ATP hydrolysis occurs at the interface between the nucleotide-binding domains of subunits A and B. ATP hydrolysis triggers a conformational change in the subunits D and F, which induces a shift of subunit d. The c-ring is subsequently rotated and results in a continuous proton translocation across the membrane. In terms of biological role, catalytic subunit of the V1 complex of vacuolar(H+)-ATPase (V-ATPase), a multisubunit enzyme composed of a peripheral complex (V1) that hydrolyzes ATP and a membrane integral complex (V0) that translocates protons. V-ATPase is responsible for acidifying and maintaining the pH of intracellular compartments and in some cell types, is targeted to the plasma membrane, where it is responsible for acidifying the extracellular environment. The sequence is that of V-type proton ATPase catalytic subunit A (VhaA) from Aedes aegypti (Yellowfever mosquito).